The sequence spans 355 residues: MKIRIDIPHHPYDIQIEKGCMAQAGQWLRELWQPQKVVIVTDNHVASLYAEKVKLSLEDAGFQVAVFDFLEGEERKNLTTVQKVYEFLVKQGLTRSDGIVALGGGVVGDLAGFVASTYMRGIHFVQIPTSLTAQVDSSIGGKTGVNTPFAKNMVGTFAQPDGVLIDPLVLETLGKRELIEGMGEVIKYGLIEDPELWALLTGLNGSVESILEHAETLIXHSCQVKRKMVVEDELDNGIRLYLNFGHTIGHAIEATAGYGKVMHGEAVAMGMVQISKIAEEKGLMPAGITQSITEMCQKFGLPVDYENWEVDKLYQALTHDKKARGNTLKLVLVPELGSATIHPVSLEEMKDYLVK.

NAD(+)-binding positions include 71–76 (EGEERK), 105–109 (GVVGD), 129–130 (TS), Lys142, and Lys151. The Zn(2+) site is built by Glu184, His246, and His263.

This sequence belongs to the sugar phosphate cyclases superfamily. Dehydroquinate synthase family. Co(2+) is required as a cofactor. Zn(2+) serves as cofactor. The cofactor is NAD(+).

It is found in the cytoplasm. It catalyses the reaction 7-phospho-2-dehydro-3-deoxy-D-arabino-heptonate = 3-dehydroquinate + phosphate. It functions in the pathway metabolic intermediate biosynthesis; chorismate biosynthesis; chorismate from D-erythrose 4-phosphate and phosphoenolpyruvate: step 2/7. Functionally, catalyzes the conversion of 3-deoxy-D-arabino-heptulosonate 7-phosphate (DAHP) to dehydroquinate (DHQ). The chain is 3-dehydroquinate synthase from Streptococcus pneumoniae serotype 19F (strain G54).